The sequence spans 24 residues: Brevinin-1Bf (24 aa).

Residues Cys-18 and Cys-24 are joined by a disulfide bond.

Expressed by the skin glands.

It localises to the secreted. In terms of biological role, antibacterial activity against Gram-positive bacterium S.aureus and Gram-negative bacterium E.coli. This Lithobates berlandieri (Rio Grande leopard frog) protein is Brevinin-1Bf.